The primary structure comprises 360 residues: UPF0324 membrane protein plu2856 (360 aa).

The next 9 helical transmembrane spans lie at 20–42 (LIPGLILAAILTAISIYAGNIPW), 47–69 (GLGTLTLAILAGIIVGNTVYPLL), 104–126 (VGITGLLIDAAMLSSTFFIAIWL), 136–155 (QTVILIGAGSSICGAAAIMA), 167–189 (VAVAVSTIVIFGTIAIFIYPWFY), 239–256 (MIRVMMLAPFLLLLSRYI), 277–299 (WFAVIFIAIAGFNSFNLLPAAIV), 304–326 (NIDTIMLTMAMGALGLTTHVSAI), and 333–355 (PILLALILFVWLMAGGLLINLGI).

The protein belongs to the UPF0324 family.

The protein resides in the cell membrane. This is UPF0324 membrane protein plu2856 from Photorhabdus laumondii subsp. laumondii (strain DSM 15139 / CIP 105565 / TT01) (Photorhabdus luminescens subsp. laumondii).